Reading from the N-terminus, the 138-residue chain is MSPISIELIIQISIGLSASLILLFAFLPQTLLTIKTKNTAALTISMFIICFIARLCFSLSAILTIIVYIHNQNYGLSLYALTLPVLICHGINMLLNLIIAFIKINNVYKAKIHKMNENEYIIFAYAQKLKEKVSIKNK.

3 consecutive transmembrane segments (helical) span residues 8-28, 47-67, and 82-102; these read LIIQISIGLSASLILLFAFLP, FIICFIARLCFSLSAILTIIV, and TLPVLICHGINMLLNLIIAFI.

To U.parvum UU007, UU008 and UU041.

The protein resides in the cell membrane. This is an uncharacterized protein from Ureaplasma parvum serovar 3 (strain ATCC 700970).